The chain runs to 243 residues: Probable transcriptional regulatory protein BDI_1233 (243 aa).

This sequence belongs to the TACO1 family.

Its subcellular location is the cytoplasm. This Parabacteroides distasonis (strain ATCC 8503 / DSM 20701 / CIP 104284 / JCM 5825 / NCTC 11152) protein is Probable transcriptional regulatory protein BDI_1233.